The following is a 446-amino-acid chain: Peptide chain release factor 1, mitochondrial (446 aa).

Residues 1–62 (MSHHLCIWLF…LLNKSWSRGC (62 aa)) constitute a mitochondrion transit peptide. The GGQ domain stretch occupies residues 298-362 (PKDLRVDTFR…LRARLYQQII (65 aa)). The GGQ motif lies at 312 to 314 (GGQ). Gln314 bears the N5-methylglutamine mark.

Belongs to the prokaryotic/mitochondrial release factor family. Methylation of glutamine in the GGQ triplet by HEMK1 is conserved from bacteria to mammals.

The protein localises to the mitochondrion. Its function is as follows. Mitochondrial peptide chain release factor that directs the termination of translation in response to the peptide chain non-canonical stop codons AGG and AGA. Non-canonical termination codons AGG and AGA are found at the end of MT-CO1/COX1 and MT-ND6/ND6 open reading frames, respectively. Recognizes non-canonical stop codons via a network of interactions between the codon, MTRF1 and the ribosomal RNA (rRNA): in contrast to other translation release factors, which identify the codon in the A-site via direct interactions of amino acid side chains with the bases, MTRF1 repositions the first 2 bases of the stop codon to use an intricate network of interactions that includes residues of the release factor, the rRNA of the small ribosomal subunit, as well as neighboring bases of the mRNA. The sequence is that of Peptide chain release factor 1, mitochondrial from Mus musculus (Mouse).